The following is a 388-amino-acid chain: uncharacterized protein (388 aa).

This is an uncharacterized protein from Ictaluridae (bullhead catfishes).